The primary structure comprises 217 residues: Superoxide dismutase [Mn], mitochondrial (217 aa).

The transit peptide at 1-17 directs the protein to the mitochondrion; it reads MFVARKISPNCKPGVRG. Positions 43, 91, 175, and 179 each coordinate Mn(2+).

The protein belongs to the iron/manganese superoxide dismutase family. As to quaternary structure, homotetramer. Mn(2+) serves as cofactor.

It is found in the mitochondrion matrix. It carries out the reaction 2 superoxide + 2 H(+) = H2O2 + O2. In terms of biological role, destroys superoxide anion radicals which are normally produced within the cells and which are toxic to biological systems. This is Superoxide dismutase [Mn], mitochondrial (Sod2) from Drosophila melanogaster (Fruit fly).